The following is a 513-amino-acid chain: ATP synthase subunit alpha 2 (513 aa).

169–176 (GDRQCGKT) is an ATP binding site.

The protein belongs to the ATPase alpha/beta chains family. In terms of assembly, F-type ATPases have 2 components, CF(1) - the catalytic core - and CF(0) - the membrane proton channel. CF(1) has five subunits: alpha(3), beta(3), gamma(1), delta(1), epsilon(1). CF(0) has three main subunits: a(1), b(2) and c(9-12). The alpha and beta chains form an alternating ring which encloses part of the gamma chain. CF(1) is attached to CF(0) by a central stalk formed by the gamma and epsilon chains, while a peripheral stalk is formed by the delta and b chains.

Its subcellular location is the cell inner membrane. The catalysed reaction is ATP + H2O + 4 H(+)(in) = ADP + phosphate + 5 H(+)(out). Produces ATP from ADP in the presence of a proton gradient across the membrane. The alpha chain is a regulatory subunit. The polypeptide is ATP synthase subunit alpha 2 (Paraburkholderia xenovorans (strain LB400)).